A 926-amino-acid chain; its full sequence is Protein translocase subunit SecA (926 aa).

Residues glutamine 87, 105 to 109 (GEGKT), and aspartate 512 contribute to the ATP site. Cysteine 911, cysteine 913, cysteine 922, and histidine 923 together coordinate Zn(2+).

This sequence belongs to the SecA family. Monomer and homodimer. Part of the essential Sec protein translocation apparatus which comprises SecA, SecYEG and auxiliary proteins SecDF-YajC and YidC. It depends on Zn(2+) as a cofactor.

The protein localises to the cell inner membrane. The protein resides in the cytoplasm. It catalyses the reaction ATP + H2O + cellular proteinSide 1 = ADP + phosphate + cellular proteinSide 2.. Its function is as follows. Part of the Sec protein translocase complex. Interacts with the SecYEG preprotein conducting channel. Has a central role in coupling the hydrolysis of ATP to the transfer of proteins into and across the cell membrane, serving both as a receptor for the preprotein-SecB complex and as an ATP-driven molecular motor driving the stepwise translocation of polypeptide chains across the membrane. This Psychrobacter cryohalolentis (strain ATCC BAA-1226 / DSM 17306 / VKM B-2378 / K5) protein is Protein translocase subunit SecA.